The chain runs to 711 residues: Double-stranded RNA-specific editase 1 (711 aa).

Residues 1 to 79 form a disordered region; the sequence is MDIEDEENMS…RRKTPGPVLP (79 aa). The span at 63 to 73 shows a compositional bias: basic residues; that stretch reads SKYRLKKRRKT. The DRBM 1 domain occupies 78-144; it reads LPKNALMQLN…AEKALRSFVQ (67 aa). Interaction with substrate RNA stretches follow at residues 83-88 and 104-105; these read LMQLNE and VH. S149 is modified (phosphoserine). The interval 176-220 is disordered; that stretch reads LFNGFETPDKSEPPFYVGSNGDDSFSSSGDVSLSASPVPASLTQP. Residues 192–213 show a composition bias toward low complexity; sequence VGSNGDDSFSSSGDVSLSASPV. A DRBM 2 domain is found at 231-298; the sequence is PSGKNPVMIL…AQSALATVFN (68 aa). Interaction with substrate RNA regions lie at residues 237 to 242 and H259; that span reads VMILNE. The A to I editase domain occupies 370–707; sequence SVSTGTKCIN…VEKPTEQDQF (338 aa). H394 serves as a coordination point for Zn(2+). E396 functions as the Proton donor in the catalytic mechanism. 2 residues coordinate 1D-myo-inositol hexakisphosphate: R400 and R401. Zn(2+)-binding residues include C451 and C526. Residues K529, R532, K639, K672, K682, and K700 each coordinate 1D-myo-inositol hexakisphosphate.

As to quaternary structure, homodimer. Homodimerization is essential for its catalytic activity. Can form heterodimers with isoform 5 of ADAR/ADAR1. 1D-myo-inositol hexakisphosphate serves as cofactor. In terms of tissue distribution, brain and peripheral tissues.

It is found in the nucleus. Its subcellular location is the nucleolus. The catalysed reaction is adenosine in double-stranded RNA + H2O + H(+) = inosine in double-stranded RNA + NH4(+). Functionally, catalyzes the hydrolytic deamination of adenosine to inosine in double-stranded RNA (dsRNA) referred to as A-to-I RNA editing. This may affect gene expression and function in a number of ways that include mRNA translation by changing codons and hence the amino acid sequence of proteins; pre-mRNA splicing by altering splice site recognition sequences; RNA stability by changing sequences involved in nuclease recognition; genetic stability in the case of RNA virus genomes by changing sequences during viral RNA replication; and RNA structure-dependent activities such as microRNA production or targeting or protein-RNA interactions. Can edit both viral and cellular RNAs and can edit RNAs at multiple sites (hyper-editing) or at specific sites (site-specific editing). Its cellular RNA substrates include: bladder cancer-associated protein (BLCAP), neurotransmitter receptors for glutamate (GRIA2 and GRIK2) and serotonin (HTR2C), GABA receptor (GABRA3) and potassium voltage-gated channel (KCNA1). Site-specific RNA editing of transcripts encoding these proteins results in amino acid substitutions which consequently alter their functional activities. Edits GRIA2 at both the Q/R and R/G sites efficiently but converts the adenosine in hotspot1 much less efficiently. Can inhibit cell proliferation and migration and can stimulate exocytosis. The sequence is that of Double-stranded RNA-specific editase 1 (Adarb1) from Rattus norvegicus (Rat).